A 237-amino-acid chain; its full sequence is Phosphoribosylaminoimidazole-succinocarboxamide synthase (237 aa).

The protein belongs to the SAICAR synthetase family.

The enzyme catalyses 5-amino-1-(5-phospho-D-ribosyl)imidazole-4-carboxylate + L-aspartate + ATP = (2S)-2-[5-amino-1-(5-phospho-beta-D-ribosyl)imidazole-4-carboxamido]succinate + ADP + phosphate + 2 H(+). It functions in the pathway purine metabolism; IMP biosynthesis via de novo pathway; 5-amino-1-(5-phospho-D-ribosyl)imidazole-4-carboxamide from 5-amino-1-(5-phospho-D-ribosyl)imidazole-4-carboxylate: step 1/2. This Enterobacter sp. (strain 638) protein is Phosphoribosylaminoimidazole-succinocarboxamide synthase.